The sequence spans 1412 residues: MPN domain-containing protein CG4751 (1412 aa).

Basic and acidic residues predominate over residues Met1–Asp10. The interval Met1–Gly123 is disordered. Composition is skewed to acidic residues over residues Gly23–Gly35 and Ser103–Thr114. The RAMA domain maps to Glu113–Cys219. Residues Ile284–Ile420 form the MPN domain. Zn(2+) contacts are provided by His361, His363, and Asp374. Disordered stretches follow at residues Ile554 to Ser589, Ser669 to Arg734, Gly853 to Lys891, Ser1027 to Gln1066, Met1271 to Gly1318, Ser1330 to Val1376, and Leu1389 to Asp1412. The stretch at Ser572–Leu600 forms a coiled coil. Ser699, Ser701, Ser705, Ser719, Ser723, and Ser728 each carry phosphoserine. The span at Pro702 to Pro720 shows a compositional bias: polar residues. 2 stretches are compositionally biased toward low complexity: residues Lys873–Lys891 and Ser1036–Gln1066. Over residues Lys1275 to Ser1290 the composition is skewed to polar residues. Ser1288 and Ser1290 each carry phosphoserine. Phosphothreonine is present on Thr1297. The span at Leu1360–Leu1370 shows a compositional bias: low complexity.

This sequence belongs to the peptidase M67 family.

Probable protease. This is MPN domain-containing protein CG4751 from Drosophila melanogaster (Fruit fly).